The primary structure comprises 21 residues: Brevinin-2-related peptide (21 aa).

The residue at position 21 (leucine 21) is a Leucine amide.

In terms of tissue distribution, expressed by the skin glands.

Its subcellular location is the secreted. Antimicrobial peptide with activity against Gram-negative and Gram-positive bacteria (MIC=13 uM against E.coli, MIC=25 uM against S.aureus) and fungi (MIC=25 uM against C.albicans). Also shows hemolytic activity (HC(50)=50 uM). In vitro, shows moderate inhibitory activity against HIV. The polypeptide is Brevinin-2-related peptide (Lithobates septentrionalis (Mink frog)).